An 802-amino-acid chain; its full sequence is Xylanase/beta-glucanase (802 aa).

An N-terminal signal peptide occupies residues 1 to 31 (MKKSIFKRYAAAVGLMASVLMFTAVPTTSNA). One can recognise a GH11 domain in the interval 32–239 (ADDQKTGKVG…SNGSANVKSI (208 aa)). Catalysis depends on glutamate 124, which acts as the Nucleophile. Glutamate 226 functions as the Proton donor in the catalytic mechanism. The segment at 245–523 (IDIPDPEPIK…SYLEGHDPSK (279 aa)) is b. In terms of domain architecture, CBM-cenC spans 258 to 404 (NGYYLKENFE…YMDGAYAGVK (147 aa)). 2 disordered regions span residues 414–436 (SQSVDPPVTEPTNPTNPTGPSVT) and 533–564 (TTTTTTTTTTTSKTTTTTTTTSPAMHGGYRDL). Composition is skewed to low complexity over residues 419 to 436 (PPVTEPTNPTNPTGPSVT) and 533 to 553 (TTTTTTTTTTTSKTTTTTTTT). The Dockerin domain occupies 434-513 (SVTKWGDANC…LIRAISELPE (80 aa)). A linker region spans residues 524–555 (TTTTTTRITTTTTTTTTTTTSKTTTTTTTTSP). The region spanning 556 to 792 (AMHGGYRDLG…WVTYNKNGVQ (237 aa)) is the GH16 domain. The active-site Nucleophile is glutamate 684.

This sequence in the N-terminal section; belongs to the glycosyl hydrolase 11 (cellulase G) family. In the C-terminal section; belongs to the glycosyl hydrolase 16 family.

The catalysed reaction is Endohydrolysis of (1-&gt;4)-beta-D-xylosidic linkages in xylans.. It carries out the reaction Hydrolysis of (1-&gt;4)-beta-D-glucosidic linkages in beta-D-glucans containing (1-&gt;3)- and (1-&gt;4)-bonds.. Its pathway is glycan degradation; xylan degradation. Its function is as follows. Contains two catalytic domains with xylanase and endo-beta-1,3-1,4 glucanase activities. This Ruminococcus flavefaciens protein is Xylanase/beta-glucanase (xynD).